Reading from the N-terminus, the 481-residue chain is G-protein coupled receptor 37-like 1 (481 aa).

The first 24 residues, 1–24 (MRWLWPLAVSLAVVLAVGPSEVSG), serve as a signal peptide directing secretion. The Extracellular segment spans residues 25–134 (AATLSLGGHR…ESSYSAYAVM (110 aa)). Disordered regions lie at residues 30–55 (LGGH…GPKE) and 76–107 (LQPT…TNLT). Polar residues predominate over residues 95-107 (TSESGQELRTNLT). N105 is a glycosylation site (N-linked (GlcNAc...) asparagine). The chain crosses the membrane as a helical span at residues 135 to 155 (LLALVVFAVGIVGNLSVMCIV). The Cytoplasmic portion of the chain corresponds to 156-167 (WHSYYLKSAWNS). The chain crosses the membrane as a helical span at residues 168–188 (ILASLALWDFLVLFFCLPIVI). Residues 189-205 (FNEITKQRLLGDVSCRA) lie on the Extracellular side of the membrane. Cysteines 203 and 286 form a disulfide. Residues 206-226 (VPFMEVSSLGVTTFSLCALGI) form a helical membrane-spanning segment. The Cytoplasmic segment spans residues 227 to 251 (DRFHVATSTLPKVRPIERCQSILAK). A helical membrane pass occupies residues 252–272 (LAVIWVGSMMLAVPELLLWQL). Residues 273 to 310 (AQEPTPTMGTVDSCIMKPSADLPESLYSLVMTYQNARM) are Extracellular-facing. A helical transmembrane segment spans residues 311–331 (WWYFGCYFCLPILFTVTCQLV). Topologically, residues 332–360 (TWRVRGPPGRKPECRAGRHEQCESQLNST) are cytoplasmic. The helical transmembrane segment at 361–381 (VVGLTVVYAFCTLPENICNIV) threads the bilayer. The Extracellular portion of the chain corresponds to 382–398 (VAYLSTELTRQTLDLLG). Residues 399–419 (LINQFSTFFKGAITPVLLLCI) form a helical membrane-spanning segment. Topologically, residues 420 to 481 (CRPLGQAFLD…PPLLPLGTPC (62 aa)) are cytoplasmic. A Phosphoserine modification is found at S471. The residue at position 479 (T479) is a Phosphothreonine.

This sequence belongs to the G-protein coupled receptor 1 family. In terms of assembly, interacts with the PTCH1 receptor. Undergoes metalloprotease-mediated cleavage which reduces its constitutive activity. Post-translationally, ubiquitinated. As to expression, highly expressed in brain.

The protein localises to the cell membrane. It is found in the cell projection. The protein resides in the cilium membrane. In terms of biological role, G-protein coupled receptor. Has been shown to bind the neuroprotective and glioprotective factor prosaposin (PSAP), leading to endocytosis followed by an ERK phosphorylation cascade. However, other studies have shown that prosaposin does not increase activity. It has been suggested that GPR37L1 is a constitutively active receptor which signals through the guanine nucleotide-binding protein G(s) subunit alpha. Participates in the regulation of postnatal cerebellar development by modulating the Shh pathway. Regulates baseline blood pressure in females and protects against cardiovascular stress in males. Mediates inhibition of astrocyte glutamate transporters and reduction in neuronal N-methyl-D-aspartate receptor activity. This chain is G-protein coupled receptor 37-like 1 (Gpr37l1), found in Rattus norvegicus (Rat).